Here is a 239-residue protein sequence, read N- to C-terminus: Ribosomal RNA small subunit methyltransferase G (239 aa).

S-adenosyl-L-methionine contacts are provided by residues Gly78, Phe83, 129 to 130, and Arg148; that span reads AE.

Belongs to the methyltransferase superfamily. RNA methyltransferase RsmG family.

It is found in the cytoplasm. In terms of biological role, specifically methylates the N7 position of a guanine in 16S rRNA. The protein is Ribosomal RNA small subunit methyltransferase G of Clostridium perfringens (strain SM101 / Type A).